We begin with the raw amino-acid sequence, 209 residues long: Guanylate kinase (209 aa).

The region spanning 5–182 (GLLIVISGPS…AVTKINSIIV (178 aa)) is the Guanylate kinase-like domain. 12-19 (GPSGAGKG) contacts ATP.

This sequence belongs to the guanylate kinase family.

Its subcellular location is the cytoplasm. It catalyses the reaction GMP + ATP = GDP + ADP. Functionally, essential for recycling GMP and indirectly, cGMP. In Clostridium acetobutylicum (strain ATCC 824 / DSM 792 / JCM 1419 / IAM 19013 / LMG 5710 / NBRC 13948 / NRRL B-527 / VKM B-1787 / 2291 / W), this protein is Guanylate kinase.